Consider the following 370-residue polypeptide: Coproporphyrin III ferrochelatase (370 aa).

Residues Ser-58 and Tyr-127 each coordinate Fe-coproporphyrin III. Residues His-189 and Glu-276 each contribute to the Fe(2+) site.

The protein belongs to the ferrochelatase family.

The protein resides in the cytoplasm. The enzyme catalyses Fe-coproporphyrin III + 2 H(+) = coproporphyrin III + Fe(2+). It functions in the pathway porphyrin-containing compound metabolism; protoheme biosynthesis. Involved in coproporphyrin-dependent heme b biosynthesis. Catalyzes the insertion of ferrous iron into coproporphyrin III to form Fe-coproporphyrin III. The polypeptide is Coproporphyrin III ferrochelatase (Corynebacterium glutamicum (strain R)).